A 309-amino-acid polypeptide reads, in one-letter code: Peptidyl-prolyl cis-trans isomerase 9 (309 aa).

In terms of domain architecture, PPIase cyclophilin-type spans 8-173 (FLDISVDENL…AKVLISNCGE (166 aa)). Composition is skewed to basic and acidic residues over residues 217 to 229 (NEKK…DKRR), 239 to 265 (RSHE…RDEN), 280 to 289 (ERSATPEHWR), and 296 to 309 (WVHD…EDLV). The disordered stretch occupies residues 217 to 309 (NEKKHEMRND…SHKHPEEDLV (93 aa)).

This sequence belongs to the cyclophilin-type PPIase family. In terms of tissue distribution, co-expressed with pdi-1 in the syncytial hypodermis.

It catalyses the reaction [protein]-peptidylproline (omega=180) = [protein]-peptidylproline (omega=0). Its function is as follows. PPIases accelerate the folding of proteins. It catalyzes the cis-trans isomerization of proline imidic peptide bonds in oligopeptides. Thought to function as a catalyst in the folding and modification of cuticle collagens. This is Peptidyl-prolyl cis-trans isomerase 9 (cyn-9) from Caenorhabditis elegans.